The primary structure comprises 529 residues: Bifunctional purine biosynthesis protein PurH (529 aa).

The MGS-like domain maps to 1-148 (MQQRRSVRRA…KNHKDVAIVV (148 aa)).

Belongs to the PurH family.

It catalyses the reaction (6R)-10-formyltetrahydrofolate + 5-amino-1-(5-phospho-beta-D-ribosyl)imidazole-4-carboxamide = 5-formamido-1-(5-phospho-D-ribosyl)imidazole-4-carboxamide + (6S)-5,6,7,8-tetrahydrofolate. The catalysed reaction is IMP + H2O = 5-formamido-1-(5-phospho-D-ribosyl)imidazole-4-carboxamide. It functions in the pathway purine metabolism; IMP biosynthesis via de novo pathway; 5-formamido-1-(5-phospho-D-ribosyl)imidazole-4-carboxamide from 5-amino-1-(5-phospho-D-ribosyl)imidazole-4-carboxamide (10-formyl THF route): step 1/1. Its pathway is purine metabolism; IMP biosynthesis via de novo pathway; IMP from 5-formamido-1-(5-phospho-D-ribosyl)imidazole-4-carboxamide: step 1/1. The sequence is that of Bifunctional purine biosynthesis protein PurH from Salmonella arizonae (strain ATCC BAA-731 / CDC346-86 / RSK2980).